The sequence spans 248 residues: MYKLVLIRHGESTWNKENRFTGWVDVDLTEQGNNEAQQAGVLLKESGYTFDIAYTSVLKRAIRTLWHVQDKMDLMYLPVVHSWRLNERHYGALSGLNKAETAAKFGDEQVLVWRRSYDTPPPALEPTDDRAPYNDPRYAKVPREQLPLTECLKDTVARVLPLWNESIAPAIKSGRKVVIAAHGNSIRALVKYLDNISDDDIVGLNIPNGVPLVYELDEDLKPIKHYYLGDQEAIAKAQAAVAKQGKAG.

Residues 8–15 (RHGESTWN), 21–22 (TG), arginine 60, 87–90 (ERHY), lysine 98, 114–115 (RR), and 183–184 (GN) contribute to the substrate site. The Tele-phosphohistidine intermediate role is filled by histidine 9. Catalysis depends on glutamate 87, which acts as the Proton donor/acceptor.

Belongs to the phosphoglycerate mutase family. BPG-dependent PGAM subfamily. In terms of assembly, homodimer.

It carries out the reaction (2R)-2-phosphoglycerate = (2R)-3-phosphoglycerate. It functions in the pathway carbohydrate degradation; glycolysis; pyruvate from D-glyceraldehyde 3-phosphate: step 3/5. In terms of biological role, catalyzes the interconversion of 2-phosphoglycerate and 3-phosphoglycerate. The protein is 2,3-bisphosphoglycerate-dependent phosphoglycerate mutase of Paraburkholderia phytofirmans (strain DSM 17436 / LMG 22146 / PsJN) (Burkholderia phytofirmans).